Reading from the N-terminus, the 299-residue chain is Tyrosine recombinase XerC (299 aa).

Residues 1-85 (MEQHLDAYCM…AVRGFYKYLN (85 aa)) form the Core-binding (CB) domain. The 180-residue stretch at 106-285 (RLPKTLDTDR…DFQHLATVYD (180 aa)) folds into the Tyr recombinase domain. Active-site residues include Arg146, Lys170, His237, Arg240, and His263. Residue Tyr272 is the O-(3'-phospho-DNA)-tyrosine intermediate of the active site.

Belongs to the 'phage' integrase family. XerC subfamily. As to quaternary structure, forms a cyclic heterotetrameric complex composed of two molecules of XerC and two molecules of XerD.

It localises to the cytoplasm. Functionally, site-specific tyrosine recombinase, which acts by catalyzing the cutting and rejoining of the recombining DNA molecules. The XerC-XerD complex is essential to convert dimers of the bacterial chromosome into monomers to permit their segregation at cell division. It also contributes to the segregational stability of plasmids. The protein is Tyrosine recombinase XerC of Pseudomonas savastanoi pv. phaseolicola (strain 1448A / Race 6) (Pseudomonas syringae pv. phaseolicola (strain 1448A / Race 6)).